A 186-amino-acid polypeptide reads, in one-letter code: ATP-dependent protease subunit HslV (186 aa).

T14 is an active-site residue. Residues A168, C171, and T174 each contribute to the Na(+) site.

Belongs to the peptidase T1B family. HslV subfamily. In terms of assembly, a double ring-shaped homohexamer of HslV is capped on each side by a ring-shaped HslU homohexamer. The assembly of the HslU/HslV complex is dependent on binding of ATP.

It localises to the cytoplasm. It carries out the reaction ATP-dependent cleavage of peptide bonds with broad specificity.. Allosterically activated by HslU binding. In terms of biological role, protease subunit of a proteasome-like degradation complex believed to be a general protein degrading machinery. The sequence is that of ATP-dependent protease subunit HslV from Bradyrhizobium diazoefficiens (strain JCM 10833 / BCRC 13528 / IAM 13628 / NBRC 14792 / USDA 110).